Reading from the N-terminus, the 184-residue chain is uncharacterized protein (184 aa).

The tract at residues 1 to 24 (MGISDQINSNLSSQSPFTVSTNPS) is disordered.

This is an uncharacterized protein from Dictyostelium discoideum (Social amoeba).